Here is a 172-residue protein sequence, read N- to C-terminus: Lytic chitin monooxygenase (172 aa).

The first 30 residues, M1–A30, serve as a signal peptide directing secretion. Cu cation contacts are provided by H31 and H106. The 138-residue stretch at H31–V168 folds into the Chitin-binding type-4 domain.

Cu(2+) is required as a cofactor.

Its subcellular location is the secreted. The catalysed reaction is [(1-&gt;4)-N-acetyl-beta-D-glucosaminyl]n+m + reduced acceptor + O2 = [(1-&gt;4)-N-acetyl-beta-D-glucosaminyl]m-1-(1-&gt;4)-2-(acetylamino)-2-deoxy-D-glucono-1,5-lactone + [(1-&gt;4)-N-acetyl-beta-D-glucosaminyl]n + acceptor + H2O.. It functions in the pathway glycan degradation; chitin degradation. In terms of biological role, involved in chitin degradation. Catalyzes the oxidative cleavage of glycosidic bonds in chitin via a copper-dependent mechanism, leading to oxidized chitooligomers with degrees of polymerization of 4-6. Is not active on cellulose. In Streptomyces ambofaciens (strain ATCC 23877 / 3486 / DSM 40053 / JCM 4204 / NBRC 12836 / NRRL B-2516), this protein is Lytic chitin monooxygenase.